The following is a 74-amino-acid chain: Protein SlyX homolog (74 aa).

This sequence belongs to the SlyX family.

The polypeptide is Protein SlyX homolog (Neisseria meningitidis serogroup A / serotype 4A (strain DSM 15465 / Z2491)).